The primary structure comprises 184 residues: Ribose 1,5-bisphosphate phosphokinase PhnN (184 aa).

11 to 18 serves as a coordination point for ATP; that stretch reads GPSGAGKD.

This sequence belongs to the ribose 1,5-bisphosphokinase family.

It carries out the reaction alpha-D-ribose 1,5-bisphosphate + ATP = 5-phospho-alpha-D-ribose 1-diphosphate + ADP. Its pathway is metabolic intermediate biosynthesis; 5-phospho-alpha-D-ribose 1-diphosphate biosynthesis; 5-phospho-alpha-D-ribose 1-diphosphate from D-ribose 5-phosphate (route II): step 3/3. Its function is as follows. Catalyzes the phosphorylation of ribose 1,5-bisphosphate to 5-phospho-D-ribosyl alpha-1-diphosphate (PRPP). This is Ribose 1,5-bisphosphate phosphokinase PhnN from Burkholderia pseudomallei (strain K96243).